A 353-amino-acid chain; its full sequence is tRNA-splicing endonuclease (353 aa).

Active-site residues include tyrosine 289, histidine 300, and lysine 331.

This sequence belongs to the tRNA-intron endonuclease family. Archaeal long subfamily. Homodimer.

It catalyses the reaction pretRNA = a 3'-half-tRNA molecule with a 5'-OH end + a 5'-half-tRNA molecule with a 2',3'-cyclic phosphate end + an intron with a 2',3'-cyclic phosphate and a 5'-hydroxyl terminus.. Functionally, endonuclease that removes tRNA introns. Cleaves pre-tRNA at the 5'- and 3'-splice sites to release the intron. The products are an intron and two tRNA half-molecules bearing 2',3' cyclic phosphate and 5'-OH termini. Recognizes a pseudosymmetric substrate in which 2 bulged loops of 3 bases are separated by a stem of 4 bp. This is tRNA-splicing endonuclease from Methanosarcina mazei (strain ATCC BAA-159 / DSM 3647 / Goe1 / Go1 / JCM 11833 / OCM 88) (Methanosarcina frisia).